A 566-amino-acid chain; its full sequence is Insulinoma-associated protein 2 (566 aa).

The SNAG domain stretch occupies residues 1-20 (MPRGFLVKRTKRTGGLYRVR). The segment at 32-117 (QGAPPFLEEA…PSPSPAKPAG (86 aa)) is disordered. The segment covering 103–113 (GPSPSPSPSPA) has biased composition (pro residues). The segment at 263–283 (FICQLCKEQYADPFALAQHRC) adopts a C2H2-type 1; atypical zinc-finger fold. The C2H2-type 2 zinc finger occupies 291 to 313 (YRCPECDKVFSCPANLASHRRWH). Positions 310 to 418 (RRWHKPRPAA…RRVPVPGSTS (109 aa)) are disordered. The span at 318-348 (AAANAATVSSADGKPPSSSSSSSRDSGAIAS) shows a compositional bias: low complexity. Over residues 352–369 (EGKENSRIERTADQHPQA) the composition is skewed to basic and acidic residues. 3 C2H2-type zinc fingers span residues 426-448 (FVCP…LSTH), 470-492 (FACP…RLWH), and 525-548 (FSCK…NKCH).

In terms of tissue distribution, expressed in heart, liver, skeletal muscle, kidney and pancreas, and, to a lesser extent, in brain, lung and spleen. In the pancreas, expressed in islet cells, including insulin- and glucagon-producing alpha- and beta-cells, but not in acinar cells (at protein level). Detected in adrenal glands, particularly in the deeper layer of the cortex (at protein level).

It localises to the cytoplasm. The protein localises to the nucleus. May function as a growth suppressor or tumor suppressor in liver cells and in certain neurons. The polypeptide is Insulinoma-associated protein 2 (INSM2) (Homo sapiens (Human)).